Reading from the N-terminus, the 314-residue chain is Olfactory receptor 51I1 (314 aa).

Residues 1-27 (MLGLNGTPFQPATLQLTGIPGIQTGLT) are Extracellular-facing. Residues 28-48 (WVALIFCILYMISIVGNLSIL) traverse the membrane as a helical segment. Residues 49–56 (TLVFWEPA) lie on the Cytoplasmic side of the membrane. The chain crosses the membrane as a helical span at residues 57–77 (LHQPMYYFLSMLALNDLGVSF). Residues 78 to 101 (STLPTVISTFCFNYNHVAFNACLV) are Extracellular-facing. A disulfide bridge links C99 with C191. A helical membrane pass occupies residues 102–122 (QMFFIHTFSFMESGILLAMSL). The Cytoplasmic portion of the chain corresponds to 123–141 (DRFVAICYPLRYVTVLTHN). The helical transmembrane segment at 142-162 (RILAMGLGILTKSFTTLFPFP) threads the bilayer. Residues 163–198 (FVVKRLPFCKGNVLHHSYCLHPDLMKVACGDIHVNN) lie on the Extracellular side of the membrane. Residues 199–219 (IYGLLVIIFTYGMDSTFILLS) traverse the membrane as a helical segment. The Cytoplasmic segment spans residues 220 to 239 (YALILRAMLVIISQEQRLKA). Residues 240–260 (LNTCMSHICAVLAFYVPIIAV) form a helical membrane-spanning segment. At 261-275 (SMIHRFWKSAPPVVH) the chain is on the extracellular side. A helical transmembrane segment spans residues 276–296 (VMMSNVYLFVPPMLNPIIYSV). The Cytoplasmic portion of the chain corresponds to 297-314 (KTKEIRKGILKFFHKSQA).

Belongs to the G-protein coupled receptor 1 family.

The protein localises to the cell membrane. In terms of biological role, odorant receptor. This chain is Olfactory receptor 51I1 (OR51I1), found in Homo sapiens (Human).